A 125-amino-acid chain; its full sequence is Small ribosomal subunit protein uS13 (125 aa).

Basic residues predominate over residues 94–116 (GLPVRGQRTRTNARTRKGPRKAV). The interval 94–125 (GLPVRGQRTRTNARTRKGPRKAVRASSAKAGR) is disordered.

This sequence belongs to the universal ribosomal protein uS13 family. In terms of assembly, part of the 30S ribosomal subunit. Forms a loose heterodimer with protein S19. Forms two bridges to the 50S subunit in the 70S ribosome.

Functionally, located at the top of the head of the 30S subunit, it contacts several helices of the 16S rRNA. In the 70S ribosome it contacts the 23S rRNA (bridge B1a) and protein L5 of the 50S subunit (bridge B1b), connecting the 2 subunits; these bridges are implicated in subunit movement. Contacts the tRNAs in the A and P-sites. In Nitrosospira multiformis (strain ATCC 25196 / NCIMB 11849 / C 71), this protein is Small ribosomal subunit protein uS13.